The chain runs to 370 residues: Histidinol-phosphate aminotransferase (370 aa).

The residue at position 229 (Lys-229) is an N6-(pyridoxal phosphate)lysine.

It belongs to the class-II pyridoxal-phosphate-dependent aminotransferase family. Histidinol-phosphate aminotransferase subfamily. Homodimer. Requires pyridoxal 5'-phosphate as cofactor.

It catalyses the reaction L-histidinol phosphate + 2-oxoglutarate = 3-(imidazol-4-yl)-2-oxopropyl phosphate + L-glutamate. It participates in amino-acid biosynthesis; L-histidine biosynthesis; L-histidine from 5-phospho-alpha-D-ribose 1-diphosphate: step 7/9. The sequence is that of Histidinol-phosphate aminotransferase from Helicobacter hepaticus (strain ATCC 51449 / 3B1).